A 292-amino-acid chain; its full sequence is MIRIILFLLTNLAVMLTFSLILAVTGIQSESIYGLLIMSSLFGFSGSILSLIMSKWIALRSVNGRIINHPSNETESWLIDTIRQQSIKKNIIMPQIAIYEAADINAFATGARRNAALIAISTGLLENMTRSEAEAVIAHEISHVSNGDMITMTLVQGVVNTFVIFISRIISQALSSLLSSNRNENSEDEKDSFLFFLISTFLEIIFGVLASIITMWFSRHREFYADASSAKLVGKEKMISALNRLKSSHEPQESDSIIAFCINGKSNSFIELFASHPSLEKRIQALKNKKYM.

The next 2 helical transmembrane spans lie at 4 to 24 (IILF…ILAV) and 32 to 52 (IYGL…LSLI). Residue His-139 coordinates Zn(2+). Glu-140 is a catalytic residue. His-143 is a Zn(2+) binding site. Helical transmembrane passes span 150–170 (ITMT…SRII) and 193–213 (FLFF…ASII). Position 222 (Glu-222) interacts with Zn(2+).

Belongs to the peptidase M48B family. Zn(2+) serves as cofactor.

Its subcellular location is the cell membrane. The chain is Protease HtpX from Buchnera aphidicola subsp. Schizaphis graminum (strain Sg).